A 715-amino-acid polypeptide reads, in one-letter code: Zinc finger protein 544 (715 aa).

Residues 14 to 85 (VCFEDVAMAF…EQEAPRDWKA (72 aa)) form the KRAB domain. Glycyl lysine isopeptide (Lys-Gly) (interchain with G-Cter in SUMO2) cross-links involve residues K273 and K289. Residues 354 to 374 (SVCNQCGKSFSCCKLIHQRTH) form a C2H2-type 1; atypical zinc finger. C2H2-type zinc fingers lie at residues 380–402 (FECT…QRTH), 408–430 (YECD…QRIH), 436–458 (YQCI…QRIH), 464–486 (YECT…KRTH), 492–514 (FKCT…QRTH), 520–542 (YECN…QRIH), 548–570 (YQCI…QRIH), 576–598 (YDCT…KRTH), 604–626 (YECN…LQIH), 632–654 (YKCN…QRTH), 660–682 (FECS…HRIH), and 688–710 (YECS…RRTH). Residue K534 forms a Glycyl lysine isopeptide (Lys-Gly) (interchain with G-Cter in SUMO2) linkage.

Belongs to the krueppel C2H2-type zinc-finger protein family.

It localises to the nucleus. Functionally, may be involved in transcriptional regulation. The polypeptide is Zinc finger protein 544 (ZNF544) (Homo sapiens (Human)).